A 455-amino-acid chain; its full sequence is O-acyltransferase pigD (455 aa).

It belongs to the trichothecene 3-O-acetyltransferase family.

Its pathway is secondary metabolite biosynthesis. In terms of biological role, O-acetyltransferase; part of the gene cluster that mediates the biosynthesis of azaphilone pigments (MonAzPs), a complex mixture of compounds with a common azaphilone skeleton very widely used as food colorants. Within the pathway, pigD directly transfers the fatty acyl chain from the beta-ketoacyl-ACP produced by the pigJ-pigK fatty acid synthase (FAS) to the C-4 alcohol. The first step of the pathway is performed by the nrPKS pigA that forms the hexaketide precursor from successive condensations of five malonyl-CoA units, with a simple acetyl-CoA starter unit. The role of esterase pigG is not clear, but it may play at most a supplementary role in the formation of the benzaldehyde produced by the pigA nrPKS. This very reactive benzaldehyde is intercepted by the pigC ketoreductase that to provide the first stable enzyme-free MonAzPs intermediate, 6-(4-hydroxy-2-oxopentyl)-3-methyl-2,4-dioxocyclohexane carbaldehyde, also known as M7PKS-1. The FAD-dependent monooxygenase pigN hydroxylates M7PKS-1 at C-4, which triggers the formation of the pyran ring. PigJ, pigK and pigD are involved in the acetylation of the pyran ring. PigJ and pigK form the two subunits of a dedicated fungal FAS that produces the side chain fatty acyl moiety of MonAzPs and pigD transfers the fatty acyl chain to the C-4 alcohol. PigM and pigO are involved in the elimination of the omega-1 alcohol. PigM acts as an O-acetyltransferase that synthesizes the putative O-11 acetyl intermediate whereas pigO eliminates acetic acid to yield an intermediate with a C10(11) double bond. The dehydration of the C-11 alcohol followed by the reduction of the C6(7) double bond by the NAD(P)H-dependent oxidoreductase pigE increases the electrophilicity of the C-5 ketone of the resulting acyl benzopyran. This in turn sets up the C-5 ketone for an intramolecular Knoevenagel aldol condensation with the C-20 enol of the side chain. This condensation affords the characteristic linear tricyclic carbon skeletons of the yellow pigments that serve as the common precursors for the classical yellow pigments monascin and ankaflavin, orange pigments rubopunctatin and monascorubrin, and red pigments ribropunctamine and monascorubramine. The FAD-dependent oxidoreductase pigF is especially invoved in the biosynthesis of orange and red pigments via desaturation of C6(7). The polypeptide is O-acyltransferase pigD (Monascus ruber (Mold)).